A 311-amino-acid polypeptide reads, in one-letter code: Immune-associated nucleotide-binding protein 7 (311 aa).

In terms of domain architecture, AIG1-type G spans 14 to 222 (KQAENIVLVG…YTDDTYHMIK (209 aa)). The tract at residues 23–30 (GRTGNGKS) is G1. GTP contacts are provided by residues 23-31 (GRTGNGKSA) and serine 44. The G2 stretch occupies residues 50–54 (GVTMK). The G3 stretch occupies residues 72-75 (DTPG). A G4 region spans residues 142 to 145 (TGGD). The tract at residues 181 to 183 (DNK) is G5. Asparagine 182 contributes to the GTP binding site. The stretch at 218–295 (YHMIKEESEK…TQENNELNLA (78 aa)) forms a coiled coil.

This sequence belongs to the TRAFAC class TrmE-Era-EngA-EngB-Septin-like GTPase superfamily. AIG1/Toc34/Toc159-like paraseptin GTPase family. IAN subfamily. As to expression, ubiquitous.

The protein is Immune-associated nucleotide-binding protein 7 of Arabidopsis thaliana (Mouse-ear cress).